The sequence spans 226 residues: UPF0758 protein SAK_1186 (226 aa).

The MPN domain occupies 103–225 (QILSSEQLAR…YYSFREEADI (123 aa)). Zn(2+) contacts are provided by His174, His176, and Asp187. The JAMM motif motif lies at 174-187 (HNHPSGSPKPSESD).

The protein belongs to the UPF0758 family.

This chain is UPF0758 protein SAK_1186, found in Streptococcus agalactiae serotype Ia (strain ATCC 27591 / A909 / CDC SS700).